The sequence spans 1153 residues: Probable RNA-dependent RNA polymerase 3 (1153 aa).

The protein belongs to the RdRP family. As to expression, expressed in shoot apical meristem (SAM) and panicles.

The catalysed reaction is RNA(n) + a ribonucleoside 5'-triphosphate = RNA(n+1) + diphosphate. Functionally, probably involved in the RNA silencing pathway and required for the generation of small interfering RNAs (siRNAs). This is Probable RNA-dependent RNA polymerase 3 (RDR3) from Oryza sativa subsp. japonica (Rice).